The sequence spans 451 residues: AAA-ATPase At3g28570, mitochondrial (451 aa).

A mitochondrion-targeting transit peptide spans 1–48 (MFAENLTRIGSNVAGLFFVWSTLKRYFPRQIQQLLFNAIQRIPIFKRL). An ATP-binding site is contributed by 243 to 250 (GPPGTGKS).

It belongs to the AAA ATPase family. BCS1 subfamily. Mg(2+) is required as a cofactor.

It is found in the mitochondrion. It carries out the reaction ATP + H2O = ADP + phosphate + H(+). This is AAA-ATPase At3g28570, mitochondrial from Arabidopsis thaliana (Mouse-ear cress).